The following is a 316-amino-acid chain: Biotin synthase (316 aa).

Positions 36–264 constitute a Radical SAM core domain; it reads FDNRITLCAI…TATLRICGGR (229 aa). [4Fe-4S] cluster contacts are provided by Cys53, Cys57, and Cys60. Cys129, Cys189, and Arg259 together coordinate [2Fe-2S] cluster.

Belongs to the radical SAM superfamily. Biotin synthase family. As to quaternary structure, homodimer. The cofactor is [4Fe-4S] cluster. Requires [2Fe-2S] cluster as cofactor.

The catalysed reaction is (4R,5S)-dethiobiotin + (sulfur carrier)-SH + 2 reduced [2Fe-2S]-[ferredoxin] + 2 S-adenosyl-L-methionine = (sulfur carrier)-H + biotin + 2 5'-deoxyadenosine + 2 L-methionine + 2 oxidized [2Fe-2S]-[ferredoxin]. It participates in cofactor biosynthesis; biotin biosynthesis; biotin from 7,8-diaminononanoate: step 2/2. Catalyzes the conversion of dethiobiotin (DTB) to biotin by the insertion of a sulfur atom into dethiobiotin via a radical-based mechanism. The polypeptide is Biotin synthase (Desulfovibrio desulfuricans (strain ATCC 27774 / DSM 6949 / MB)).